A 377-amino-acid polypeptide reads, in one-letter code: MTHVLRARRLLTEEGWLDDHQLRIADGVIAAIEPIPVSVTERDAELLCPAYIDTHVHGGAGVDVMDDAPDVLDKLAMHKAREGVGSWLPTTVTAPLSTIHAALKRIAQRCQRGGPGAQVLGSYLEGPYFTPQNKGAHPPELFRELEIAELDQLIAVSQHTLRVVALAPEKEGALQAIRHLKQQNVRVMLGHSAATWQQTRAAFDAGADGLVHCYNGMTGLHHREPGMVGAGLTDKRAWLELIADGHHVHPAAMSLCCCCAKERIVLITDAMQAAGMPDGRYTLCGEEVQMHGGVVRTASGGLAGSTLSVDAAVRNMVELTGVTPAEAIHMASLHPARMLGVDGVLGSLKPGKRASVVALDSGLHVQQIWIQGQLASF.

Glu125 provides a ligand contact to a divalent metal cation. 136–137 is a binding site for substrate; that stretch reads AH. The a divalent metal cation site is built by His191 and His212. Substrate is bound by residues 215 to 216, Arg223, and 244 to 247; these read NG and DGHH. Residue Asp269 is the Proton donor/acceptor of the active site. 302–304 contacts substrate; the sequence is LAG.

It belongs to the metallo-dependent hydrolases superfamily. NagA family. Requires a divalent metal cation as cofactor.

The enzyme catalyses N-acetyl-D-galactosamine 6-phosphate + H2O = D-galactosamine 6-phosphate + acetate. Its function is as follows. Catalyzes the deacetylation of N-acetyl-D-galactosamine 6-phosphate to D-galactosamine 6-phosphate. Can probably also catalyze the deacetylation of N-acetyl-D-glucosamine 6-phosphate to D-glucosamine 6-phosphate. The protein is N-acetylgalactosamine-6-phosphate deacetylase (agaA) of Escherichia coli O157:H7.